The chain runs to 505 residues: ATP synthase subunit alpha (505 aa).

Residue 170 to 177 (GDRQTGKS) participates in ATP binding.

It belongs to the ATPase alpha/beta chains family. F-type ATPases have 2 components, CF(1) - the catalytic core - and CF(0) - the membrane proton channel. CF(1) has five subunits: alpha(3), beta(3), gamma(1), delta(1), epsilon(1). CF(0) has four main subunits: a(1), b(1), b'(1) and c(9-12).

The protein localises to the cellular thylakoid membrane. The catalysed reaction is ATP + H2O + 4 H(+)(in) = ADP + phosphate + 5 H(+)(out). In terms of biological role, produces ATP from ADP in the presence of a proton gradient across the membrane. The alpha chain is a regulatory subunit. This is ATP synthase subunit alpha from Prochlorococcus marinus (strain MIT 9312).